Here is a 191-residue protein sequence, read N- to C-terminus: UPF0312 protein Shewmr7_1249 (191 aa).

Residues 1-22 (MKKQLLAALIGGFLLAPMAASA) form the signal peptide.

Belongs to the UPF0312 family. Type 1 subfamily.

The protein localises to the periplasm. The chain is UPF0312 protein Shewmr7_1249 from Shewanella sp. (strain MR-7).